The following is a 687-amino-acid chain: MKPVHERSQECLPPKKRDLPVTSEDMGRTTSCSTNHTPSSDASEWSRGVVVAGQSQTGARVSLGGDGTEAITGLTVDQYGMLYKVAVPPATFSPTGLPSVVNMSPLPPTFNVASSLIQHPGIHYPPVHYAQLPSTSLQFIGSPYSLPYAVPPNFLPSPLLSPSANLATTHLPHFVPYASLLAEEATPPPQAASPAQSFNKSSSATSPPGQLPHHSNTQPLDLAPGRMPIYYQMSRLPAGYTLHETSTAGASPILTPQEGQSALEAAAANGQRQRERNVRRESEALDSASSKGESQGLVPVVECMADGQLFSGSQTPRVEVAAPAHRGTPDTDLEVQRVVGALASQDYRVVAAQRKDEPSPLNLSHHNLDHQGEGRGSARNPTELVEKSQARVFYPQSHQEPVKHRPLPKAMVVANGNLVPTGTDPSLLPVGSEILVASSLDLQARATFPDKEPTPPPVTSSHLPSHFMKGAIIQLATGELKRVEDLQTQDFVRSAEVSGGLKIDSSTVVDIQESQWPGFVMLHFVVGEQQSKVSIEVPPEHPFFVYGQGWSSCSPGRTAQLFSLPCHRLQVGDVCISISLQSLNSNSVSQASCAPPGQLGTPRERPERTVLGPRDLCDSEGKNQPSGEGSRVGEPSQPEPGAQACWPAPSFQRFSMQGEEARAAMLRPSFIPQEVKLSIEGRSNAGK.

Positions 1–19 (MKPVHERSQECLPPKKRDL) are enriched in basic and acidic residues. Disordered stretches follow at residues 1–46 (MKPV…SEWS), 185–223 (ATPP…LDLA), and 261–294 (SALE…KGES). The tract at residues 20-197 (PVTSEDMGRT…PPQAASPAQS (178 aa)) is interaction with NCOR2 and ATXN1. The interval 20 to 197 (PVTSEDMGRT…PPQAASPAQS (178 aa)) is self-association. Composition is skewed to polar residues over residues 28–43 (RTTS…SDAS) and 198–219 (FNKS…NTQP). Residues 272 to 283 (RQRERNVRRESE) show a composition bias toward basic and acidic residues. Serine 282 is modified (phosphoserine). A Phosphothreonine modification is found at threonine 328. The interval 356–379 (DEPSPLNLSHHNLDHQGEGRGSAR) is disordered. Position 359 is a phosphoserine (serine 359). The AXH domain occupies 455 to 586 (PPPVTSSHLP…SISLQSLNSN (132 aa)). Residues 587–649 (SVSQASCAPP…PGAQACWPAP (63 aa)) form a disordered region.

This sequence belongs to the ATXN1 family. In terms of assembly, homodimer. Interacts (via AXH domain) with NCOR2. Interacts with ATXN1 and CIC. Directly interacts with RBPJ; this interaction is disrupted in the presence of Notch intracellular domain. Competes with ATXN1 for RBPJ-binding. Found in a complex with CIC and ATXN1. As to expression, expressed in the cortex and hypothalamus (at protein level). Expressed in neuronal cells. Highly expressed in Purkinje cells of cerebellum.

It is found in the nucleus. Its subcellular location is the cell projection. It localises to the dendrite. Its function is as follows. Chromatin-binding factor that repress Notch signaling in the absence of Notch intracellular domain by acting as a CBF1 corepressor. Binds to the HEY promoter and might assist, along with NCOR2, RBPJ-mediated repression. Can suppress the cytotoxicity of ATXN1 in spinocerebellar ataxia type 1 (SCA1). In concert with CIC and ATXN1, involved in brain development. The sequence is that of Ataxin-1-like (Atxn1l) from Mus musculus (Mouse).